Consider the following 221-residue polypeptide: GDP-perosamine N-acetyltransferase (221 aa).

His139 acts as the Proton acceptor in catalysis.

The protein belongs to the transferase hexapeptide repeat family. As to quaternary structure, homotrimer.

The catalysed reaction is GDP-alpha-D-perosamine + acetyl-CoA = GDP-N-acetyl-alpha-D-perosamine + CoA + H(+). The protein operates within bacterial outer membrane biogenesis; LPS O-antigen biosynthesis. Catalyzes the transfer of an acetyl residue from acetyl-CoA onto GDP-perosamine to form GDP-N-acetyl-perosamine. This Escherichia coli O157:H7 protein is GDP-perosamine N-acetyltransferase.